The following is a 504-amino-acid chain: MGVFRFISISLAAVSAANAAQILSMPHAQTVPNSYIVMMKDDTSDDDFKHHQSWLQSTHTHNITRRATIQNAGMRHKYNFNKMKGYSGIFDDETIKDIAKDPKVMFVEPDTIVSVHGKVEQSNVPSWGLARISNPQPGADSYTYDSSAGEGITVYSVDTGVDVNHEDFEGRAIWGSNQVNDGDDRDGSGHGTHTSGTMVGKMYGIAKKAKLVAVKVLGNDGSGPTSGIVAGINWSVEHARQNGGTKKAVMNMSLGGSSSSALNRAAAQAVEQGMFLSVAAGNDNQDAQSSSPASEPSVCTVGSSAEDDSRSSFSNWGPAIDIFAPGSNIVSARPGGGSQSMSGTSMAAPHVAGLAAYLMALEGISGGAVCDRLKELGTSSITDAGPGTPTNVLINNGGAKGGQPNPNPAPAPSPSQPSEPQQPTPSQPGQPGEPFPGEPFPGEPFPGQPFPGESAPAPAPAPMPPTPQHPHTPYPGGDNFDFDSFWKKYFGGEHWRKMFSSFWN.

Positions 1–19 are cleaved as a signal peptide; it reads MGVFRFISISLAAVSAANA. Positions 20–116 are excised as a propeptide; sequence AQILSMPHAQ…VEPDTIVSVH (97 aa). The 83-residue stretch at 34–116 folds into the Inhibitor I9 domain; it reads SYIVMMKDDT…VEPDTIVSVH (83 aa). The 275-residue stretch at 126-400 folds into the Peptidase S8 domain; sequence SWGLARISNP…NVLINNGGAK (275 aa). Catalysis depends on charge relay system residues Asp-158 and His-190. The interval 172–198 is disordered; sequence AIWGSNQVNDGDDRDGSGHGTHTSGTM. N-linked (GlcNAc...) asparagine glycans are attached at residues Asn-233 and Asn-251. Over residues 282-294 the composition is skewed to polar residues; it reads NDNQDAQSSSPAS. The segment at 282–312 is disordered; that stretch reads NDNQDAQSSSPASEPSVCTVGSSAEDDSRSS. Ser-345 functions as the Charge relay system in the catalytic mechanism. The span at 378-394 shows a compositional bias: polar residues; it reads TSSITDAGPGTPTNVLI. The interval 378–483 is disordered; the sequence is TSSITDAGPG…YPGGDNFDFD (106 aa). Composition is skewed to pro residues over residues 405–449 and 457–473; these read NPNP…PGQP and APAP…PHTP.

It belongs to the peptidase S8 family.

It localises to the secreted. Secreted subtilisin-like serine protease with keratinolytic activity that contributes to pathogenicity. The chain is Subtilisin-like protease 1 (SUB1) from Trichophyton rubrum (Athlete's foot fungus).